The chain runs to 229 residues: Molybdenum transport system permease protein ModB (229 aa).

Residues 6-214 form the ABC transmembrane type-1 domain; sequence INLSLSVAVS…LISLLLSEWL (209 aa). 5 helical membrane passes run 12–32, 45–65, 83–103, 132–152, and 196–216; these read VAVS…WLLA, VIHL…LVAM, FGFS…PLVV, FFTI…VLGF, and LCLF…WLSK.

Belongs to the binding-protein-dependent transport system permease family. CysTW subfamily.

It localises to the cell inner membrane. In terms of biological role, part of the binding-protein-dependent transport system for molybdenum; probably responsible for the translocation of the substrate across the membrane. This is Molybdenum transport system permease protein ModB (modB) from Haemophilus influenzae (strain ATCC 51907 / DSM 11121 / KW20 / Rd).